Here is a 498-residue protein sequence, read N- to C-terminus: DEAD-box ATP-dependent RNA helicase 6 (498 aa).

A disordered region spans residues 1–109 (MDPRARYPPG…WKAQLKLPPQ (109 aa)). The span at 33-49 (QHQHQHQQPPHPHHHQY) shows a compositional bias: basic residues. Composition is skewed to low complexity over residues 50–61 (VQRQPQPQQTPH) and 75–86 (AAEAAGASEQKA). Residues 124–152 (NEFEDYFLKRELLMGIYEKGFERPSPIQE) carry the Q motif motif. The 171-residue stretch at 155–325 (IPIALTGSDI…DKYLPKPYVI (171 aa)) folds into the Helicase ATP-binding domain. 168 to 175 (AKNGTGKT) contributes to the ATP binding site. The DEAD box motif lies at 273–276 (DEAD). Residues 335 to 495 (GITQFYAFVE…PIPPQIDRAI (161 aa)) form the Helicase C-terminal domain.

The protein belongs to the DEAD box helicase family. DDX6/DHH1 subfamily.

The protein localises to the cytoplasm. The protein resides in the P-body. It carries out the reaction ATP + H2O = ADP + phosphate + H(+). ATP-dependent RNA helicase involved in mRNA turnover, and more specifically in mRNA decapping. This Oryza sativa subsp. japonica (Rice) protein is DEAD-box ATP-dependent RNA helicase 6.